Reading from the N-terminus, the 550-residue chain is Dihydroxy-acid dehydratase (550 aa).

Asp78 is a binding site for Mg(2+). Residue Cys119 coordinates [2Fe-2S] cluster. Mg(2+)-binding residues include Asp120 and Lys121. At Lys121 the chain carries N6-carboxylysine. [2Fe-2S] cluster is bound at residue Cys191. Glu440 is a binding site for Mg(2+). The Proton acceptor role is filled by Ser466.

Belongs to the IlvD/Edd family. Homodimer. [2Fe-2S] cluster serves as cofactor. Mg(2+) is required as a cofactor.

It carries out the reaction (2R)-2,3-dihydroxy-3-methylbutanoate = 3-methyl-2-oxobutanoate + H2O. The catalysed reaction is (2R,3R)-2,3-dihydroxy-3-methylpentanoate = (S)-3-methyl-2-oxopentanoate + H2O. It functions in the pathway amino-acid biosynthesis; L-isoleucine biosynthesis; L-isoleucine from 2-oxobutanoate: step 3/4. Its pathway is amino-acid biosynthesis; L-valine biosynthesis; L-valine from pyruvate: step 3/4. Functions in the biosynthesis of branched-chain amino acids. Catalyzes the dehydration of (2R,3R)-2,3-dihydroxy-3-methylpentanoate (2,3-dihydroxy-3-methylvalerate) into 2-oxo-3-methylpentanoate (2-oxo-3-methylvalerate) and of (2R)-2,3-dihydroxy-3-methylbutanoate (2,3-dihydroxyisovalerate) into 2-oxo-3-methylbutanoate (2-oxoisovalerate), the penultimate precursor to L-isoleucine and L-valine, respectively. This chain is Dihydroxy-acid dehydratase, found in Methanococcus maripaludis (strain C7 / ATCC BAA-1331).